The following is a 225-amino-acid chain: MTQLVTRARSARGSTLGEQPRQDQLDFADHTGTAGDGNDGAAAASGPVQPGLFPDDSVPDELVGYRGPSACQIAGITYRQLDYWARTSLVVPSIRSAAGSGSQRLYSFKDILVLKIVKRLLDTGISLHNIRVAVDHLRQRGVQDLANITLFSDGTTVYECTSAEEVVDLLQGGQGVFGIAVSGAMRELTGVIADFHGERADGGESIAAPEDELASRRKHRDRKIG.

The interval 1–48 is disordered; sequence MTQLVTRARSARGSTLGEQPRQDQLDFADHTGTAGDGNDGAAAASGPV. A compositionally biased stretch (basic and acidic residues) spans 20–29; the sequence is PRQDQLDFAD. Residues 64–136 enclose the HTH merR-type domain; that stretch reads GYRGPSACQI…LHNIRVAVDH (73 aa). The interval 201 to 225 is disordered; sequence DGGESIAAPEDELASRRKHRDRKIG. Over residues 216-225 the composition is skewed to basic residues; that stretch reads RRKHRDRKIG.

This is an uncharacterized protein from Mycobacterium tuberculosis (strain CDC 1551 / Oshkosh).